A 679-amino-acid chain; its full sequence is Methionine--tRNA ligase (679 aa).

The short motif at 15 to 25 (PYANGPVHIGH) is the 'HIGH' region element. Residues cysteine 147, cysteine 150, cysteine 160, and cysteine 163 each contribute to the Zn(2+) site. The 'KMSKS' region signature appears at 332 to 336 (KISTS). Threonine 335 contributes to the ATP binding site. Positions 578–679 (DFMKLDIRVG…REVKPGSEVK (102 aa)) constitute a tRNA-binding domain.

It belongs to the class-I aminoacyl-tRNA synthetase family. MetG type 1 subfamily. In terms of assembly, homodimer. It depends on Zn(2+) as a cofactor.

Its subcellular location is the cytoplasm. The catalysed reaction is tRNA(Met) + L-methionine + ATP = L-methionyl-tRNA(Met) + AMP + diphosphate. Is required not only for elongation of protein synthesis but also for the initiation of all mRNA translation through initiator tRNA(fMet) aminoacylation. The protein is Methionine--tRNA ligase of Bacteroides fragilis (strain ATCC 25285 / DSM 2151 / CCUG 4856 / JCM 11019 / LMG 10263 / NCTC 9343 / Onslow / VPI 2553 / EN-2).